The following is a 192-amino-acid chain: Putative B3 domain-containing protein At4g03160 (192 aa).

Residues 22 to 44 form a disordered region; that stretch reads VFFDQEEEEEDEEEEYDEESVCE. The segment covering 25–44 has biased composition (acidic residues); it reads DQEEEEEDEEEEYDEESVCE. A DNA-binding region (TF-B3) is located at residues 75–173; that stretch reads KDNQYRLMLG…EICFAIDSTR (99 aa).

The protein localises to the nucleus. The chain is Putative B3 domain-containing protein At4g03160 from Arabidopsis thaliana (Mouse-ear cress).